The chain runs to 876 residues: Phosphoenolpyruvate carboxylase (876 aa).

Residues His138 and Lys543 contribute to the active site.

This sequence belongs to the PEPCase type 1 family. It depends on Mg(2+) as a cofactor.

It carries out the reaction oxaloacetate + phosphate = phosphoenolpyruvate + hydrogencarbonate. Forms oxaloacetate, a four-carbon dicarboxylic acid source for the tricarboxylic acid cycle. This chain is Phosphoenolpyruvate carboxylase, found in Pseudomonas fluorescens (strain ATCC BAA-477 / NRRL B-23932 / Pf-5).